We begin with the raw amino-acid sequence, 1671 residues long: MSSPHIELHSQRTLSPQPSSNNFELTGNKSCALSASLNGSIDDLNNNNNNNNNNNNNNNNNNNNNNNNNNNNNNNNNNNNNNNDGDKNDKKLLIITNAPTPPLTPPQPTKTQQTLLELNQKFQEQQQQQQQQQQLQKQNKQQQSQKQQEEPPSSQQEEPPLSQQQQEQEQEQEQEQEQEEQSKQKIEGKGGGGEEEECEGGGGGEGEGEEQFKEGDEEEHEGIEIDPNLPTTGYTGKRRSSLQINEASPKLIQTPSVDRTLCILDSLPCPIFQIGIIENTENGNITLTGFANERLTTLLSCSSNLLVDSLKSIPSPHYNTVPSLESCNSIPINNLAPGLLPNTDPTKILDPYISLYNKKQLKERYSNNNNNTNTNNNNNNNNNNNNNNNNNNNNNNNDTTTTTTTTTTTTTTTTTTTTTTTTNESDNNNNNNNNNNNNNNNNNNNNNNNEEIKQNTKEGEEILHESTNSTGTGNSISRPNSILQCILDSFHEQKTITEKVLLSNFLIRQQYKSRATIKPFPDGCICIFEYIENINLNYQQPPTSLNDRINSTNKLTNEMELLSLSPDSNHQHVQKLHNHNHNHHNHNHNNTTQRASSTDSPFIHSVSANSLSSMSSNSSVTSACASLSSNSSSNSNNNSNNASSSNCSSNANSNNTNSSSSNCCCCCNNNNNNNTSSTSSTISSASSTKSKSYLHQQHKNSKVYSTLLNSFENLSFLLKSTPIIIWRADHNGEMVFFKKSDEIPIDEKKVVGNNFQDFLQWVPQTYRTNFQEMFQNSLKCGKIFEFLFWFQTPQNYVQLFKIAGYPIFHIDGKDCIASKRYLIGWLGVTYNYLINDGAEISIKGSANLDSMYEKFKIIYEMPNIERTKLTNNGISSGGDITNANNNGGSSESSNKILEKKKHLISEAEKECFLKCKETYNILFKLSLLGVMFSTFKGIILDANDMLLQTIGYTRGDLENGKIDWMLLTPPEHFEISARALQELKAKRWCQPIEKAYIHKSGKRVPVLITSAMIDGSTEQCITFVFDLSRYRQAEMAAIEATRLKTQFITNISHELRTPCHGIVGMSQLLLDSQLTNTQRDNIDSIKRSTDSLISLINDILDFSKLEYGKVTLENESFELLPMIEEVLDSQATAANRKGIDLIFVMGRDYPVPPVIFGDRNSLKKVLLNLVGNAVKFTETGFVLLEISTDYESGDQISLRFTVKDSGIGIPENKIEQIFVPFGQIDGSFSRKYGGSGLGLSFCKELVALMGGYIRVESGDQEGGKGTTFWFAIKVSISSPSYLPNSVPAANQFFYPEYRPSHYNNVIGNGDSPKNVLIIESNQMVIMSIQSILLSMKCECISASKAITALDLLESSKSTENQIDIIVCSDKSTFVQQILDYVTTEKVILYGVDPNSKYNENSKVYSYLVTPITHSKLISSILLSKNLKSKNSFLTTTNNTNNTNNTNNIENKSSIDSPLSITSTSSSIITPILTSNNLDLNNNNNNNNNSILVSNNGGVDGGNNVPSTLTTIQQSQPKKYILVAEDNDINIKVVVRQLEKLGYTAIVGINGLKALEIIGSFPICLILLDCQMPQMDGFTCSTILRQIEPTGQRIPIIAMTANDSKDRCFEVGMDDYLSKPVRVDRLQKTLSDWIKTDENGNPTNSYNFYPLSYSLVYNNFIDTQLKKEKNDD.

Residues 1–10 (MSSPHIELHS) are compositionally biased toward basic and acidic residues. Disordered stretches follow at residues 1 to 27 (MSSPHIELHSQRTLSPQPSSNNFELTG), 42 to 89 (DDLN…DKND), 126 to 241 (QQQQ…RRSS), 365 to 451 (YSNN…NNEE), 579 to 603 (HNHNHHNHNHNNTTQRASSTDSPFI), and 629 to 651 (SNSSSNSNNNSNNASSSNCSSNA). Residues 11–27 (QRTLSPQPSSNNFELTG) are compositionally biased toward polar residues. Low complexity-rich tracts occupy residues 45-83 (NNNNNNNNNNNNNNNNNNNNNNNNNNNNNNNNNNNNNNN) and 126-167 (QQQQ…QQQE). Over residues 168-179 (QEQEQEQEQEQE) the composition is skewed to acidic residues. Low complexity predominate over residues 367–449 (NNNNNTNTNN…NNNNNNNNNN (83 aa)). Over residues 591–600 (TTQRASSTDS) the composition is skewed to polar residues. The Histidine kinase domain occupies 1050–1276 (NISHELRTPC…TFWFAIKVSI (227 aa)). Positions 1519-1633 (YILVAEDNDI…RLQKTLSDWI (115 aa)) constitute a Response regulatory domain.

Under osmotic stress conditions, this protein undergoes phosphorylation at a serine residue in the kinase core, which is not due to an autophosphorylation of dokA. This is in contrast to the classic two-component paradigm, which predicts only histidine and aspartate phosphorylation.

In terms of biological role, part of the osmoregulatory pathway which leads to the increase of intracellular cAMP concentration in response to hyperosmotic stress. Thought to negatively regulate the rdeA-regA pathway by acting as a phosphatase towards the HPt protein rdeA. Has probably no histidine kinase activity. This Dictyostelium discoideum (Social amoeba) protein is Hybrid signal transduction protein dokA (dokA).